Reading from the N-terminus, the 775-residue chain is 5-methyltetrahydropteroyltriglutamate--homocysteine methyltransferase (775 aa).

Residues 16–19 (REMK) and K115 each bind 5-methyltetrahydropteroyltri-L-glutamate. Residues 435–437 (IGS) and E488 contribute to the L-homocysteine site. Residues 435-437 (IGS) and E488 each bind L-methionine. Residues 519-520 (RC) and W565 each bind 5-methyltetrahydropteroyltri-L-glutamate. Residue D603 participates in L-homocysteine binding. D603 provides a ligand contact to L-methionine. E609 is a 5-methyltetrahydropteroyltri-L-glutamate binding site. Positions 645, 647, and 669 each coordinate Zn(2+). H698 functions as the Proton donor in the catalytic mechanism. Residue C730 coordinates Zn(2+).

The protein belongs to the vitamin-B12 independent methionine synthase family. The cofactor is Zn(2+).

It carries out the reaction 5-methyltetrahydropteroyltri-L-glutamate + L-homocysteine = tetrahydropteroyltri-L-glutamate + L-methionine. It participates in amino-acid biosynthesis; L-methionine biosynthesis via de novo pathway; L-methionine from L-homocysteine (MetE route): step 1/1. Its function is as follows. Catalyzes the transfer of a methyl group from 5-methyltetrahydrofolate to homocysteine resulting in methionine formation. The protein is 5-methyltetrahydropteroyltriglutamate--homocysteine methyltransferase of Coxiella burnetii (strain CbuK_Q154) (Coxiella burnetii (strain Q154)).